The primary structure comprises 376 residues: Growth/differentiation factor 8 (376 aa).

The signal sequence occupies residues Met-1–Ser-22. The propeptide occupies Asp-23–Arg-267. Intrachain disulfides connect Cys-273–Cys-283, Cys-282–Cys-341, Cys-310–Cys-373, and Cys-314–Cys-375.

It belongs to the TGF-beta family. Homodimer; disulfide-linked. In terms of tissue distribution, highly expressed in muscle. Also expressed in other tissues such as eye, gill, ovary, gut and brain. Very low level detected in testis. Not expressed in liver, kidney, stomach or heart.

It is found in the secreted. Functionally, acts specifically as a negative regulator of skeletal muscle growth. This Oreochromis mossambicus (Mozambique tilapia) protein is Growth/differentiation factor 8.